Reading from the N-terminus, the 334-residue chain is Tetraacyldisaccharide 4'-kinase (334 aa).

Position 60 to 67 (60 to 67 (TVGGTGKT)) interacts with ATP.

It belongs to the LpxK family.

It carries out the reaction a lipid A disaccharide + ATP = a lipid IVA + ADP + H(+). It participates in glycolipid biosynthesis; lipid IV(A) biosynthesis; lipid IV(A) from (3R)-3-hydroxytetradecanoyl-[acyl-carrier-protein] and UDP-N-acetyl-alpha-D-glucosamine: step 6/6. Its function is as follows. Transfers the gamma-phosphate of ATP to the 4'-position of a tetraacyldisaccharide 1-phosphate intermediate (termed DS-1-P) to form tetraacyldisaccharide 1,4'-bis-phosphate (lipid IVA). This chain is Tetraacyldisaccharide 4'-kinase, found in Stutzerimonas stutzeri (strain A1501) (Pseudomonas stutzeri).